A 204-amino-acid polypeptide reads, in one-letter code: Thiamine-phosphate synthase (204 aa).

Residues 37–41 and N69 contribute to the 4-amino-2-methyl-5-(diphosphooxymethyl)pyrimidine site; that span reads QVREK. D70 and D89 together coordinate Mg(2+). S108 contributes to the 4-amino-2-methyl-5-(diphosphooxymethyl)pyrimidine binding site. 134–136 is a binding site for 2-[(2R,5Z)-2-carboxy-4-methylthiazol-5(2H)-ylidene]ethyl phosphate; it reads TGT. K137 is a 4-amino-2-methyl-5-(diphosphooxymethyl)pyrimidine binding site. Residues G165 and 185 to 186 contribute to the 2-[(2R,5Z)-2-carboxy-4-methylthiazol-5(2H)-ylidene]ethyl phosphate site; that span reads IS.

Belongs to the thiamine-phosphate synthase family. It depends on Mg(2+) as a cofactor.

The enzyme catalyses 2-[(2R,5Z)-2-carboxy-4-methylthiazol-5(2H)-ylidene]ethyl phosphate + 4-amino-2-methyl-5-(diphosphooxymethyl)pyrimidine + 2 H(+) = thiamine phosphate + CO2 + diphosphate. It catalyses the reaction 2-(2-carboxy-4-methylthiazol-5-yl)ethyl phosphate + 4-amino-2-methyl-5-(diphosphooxymethyl)pyrimidine + 2 H(+) = thiamine phosphate + CO2 + diphosphate. It carries out the reaction 4-methyl-5-(2-phosphooxyethyl)-thiazole + 4-amino-2-methyl-5-(diphosphooxymethyl)pyrimidine + H(+) = thiamine phosphate + diphosphate. It functions in the pathway cofactor biosynthesis; thiamine diphosphate biosynthesis; thiamine phosphate from 4-amino-2-methyl-5-diphosphomethylpyrimidine and 4-methyl-5-(2-phosphoethyl)-thiazole: step 1/1. Condenses 4-methyl-5-(beta-hydroxyethyl)thiazole monophosphate (THZ-P) and 2-methyl-4-amino-5-hydroxymethyl pyrimidine pyrophosphate (HMP-PP) to form thiamine monophosphate (TMP). This is Thiamine-phosphate synthase from Clostridium novyi (strain NT).